A 777-amino-acid chain; its full sequence is E3 UFM1-protein ligase 1 homolog (777 aa).

Residues 396-417 (MKHQDPMDRDSAVGEGKADKRE) show a composition bias toward basic and acidic residues. The segment at 396–470 (MKHQDPMDRD…PSGGKKGGKD (75 aa)) is disordered.

The protein belongs to the UFL1 family.

In terms of biological role, E3 UFM1-protein ligase that mediates ufmylation of target proteins. The polypeptide is E3 UFM1-protein ligase 1 homolog (Aedes aegypti (Yellowfever mosquito)).